The chain runs to 43 residues: S-layer protein 1 (43 aa).

It is found in the secreted. The protein localises to the cell wall. It localises to the S-layer. The S-layer is a paracrystalline mono-layered assembly of proteins which coat the surface of bacteria. The protein is S-layer protein 1 of Bacillus thuringiensis subsp. konkukian.